The following is a 267-amino-acid chain: Phosphonoacetaldehyde hydrolase (267 aa).

Catalysis depends on D10, which acts as the Nucleophile. Positions 10 and 12 each coordinate Mg(2+). The active-site Schiff-base intermediate with substrate is K51. D184 is a Mg(2+) binding site.

It belongs to the HAD-like hydrolase superfamily. PhnX family. As to quaternary structure, homodimer. Mg(2+) is required as a cofactor.

The catalysed reaction is phosphonoacetaldehyde + H2O = acetaldehyde + phosphate + H(+). In terms of biological role, involved in phosphonate degradation. In Paraburkholderia xenovorans (strain LB400), this protein is Phosphonoacetaldehyde hydrolase.